Here is a 1032-residue protein sequence, read N- to C-terminus: Baseplate wedge protein gp7 (1032 aa).

Positions 1012–1032 (LKDNIGNPRDPENPTQVKIDE) are disordered.

This sequence belongs to the T4likevirus baseplate wedge protein gp7 family. As to quaternary structure, heterotrimer with gp6; assembles as a (gp6)2-gp7 heterotrimeric molecule. The (gp6)2-gp7 heterotrimeric molecule further interacts with gp25 and gp53. The gp25-(gp6)2-gp7 module is involved in sheath contraction. Interacts with gp8. Binds to gp10 homotrimer; disulfide-linked. Heteromultimer with gp10; a gp10 molecule is disulfide-linked to gp7 and the other two remaining gp10 molecules form a disulfide bond. Part of the baseplate macromolecular complex which consists of gp5, gp5.4, gp27 (central spike complex); gp6, gp25, gp53 (inner baseplate); gp7, gp8 (intermediate baseplate); gp9, gp10, gp11, gp12 (peripheral); gp48 and gp54 (proximal region of the tail tube).

It is found in the virion. Functionally, intermediate/inner baseplate protein. The gp25-(gp6)2-gp7 module is involved in sheath contraction. Involved in the tail assembly. The protein is Baseplate wedge protein gp7 (7) of Enterobacteria phage T4 (Bacteriophage T4).